We begin with the raw amino-acid sequence, 245 residues long: Ubiquinone/menaquinone biosynthesis C-methyltransferase UbiE (245 aa).

Residues Thr-71, Asp-92, and 118 to 119 (DA) each bind S-adenosyl-L-methionine.

Belongs to the class I-like SAM-binding methyltransferase superfamily. MenG/UbiE family.

The enzyme catalyses a 2-demethylmenaquinol + S-adenosyl-L-methionine = a menaquinol + S-adenosyl-L-homocysteine + H(+). The catalysed reaction is a 2-methoxy-6-(all-trans-polyprenyl)benzene-1,4-diol + S-adenosyl-L-methionine = a 5-methoxy-2-methyl-3-(all-trans-polyprenyl)benzene-1,4-diol + S-adenosyl-L-homocysteine + H(+). It participates in quinol/quinone metabolism; menaquinone biosynthesis; menaquinol from 1,4-dihydroxy-2-naphthoate: step 2/2. It functions in the pathway cofactor biosynthesis; ubiquinone biosynthesis. Functionally, methyltransferase required for the conversion of demethylmenaquinol (DMKH2) to menaquinol (MKH2) and the conversion of 2-polyprenyl-6-methoxy-1,4-benzoquinol (DDMQH2) to 2-polyprenyl-3-methyl-6-methoxy-1,4-benzoquinol (DMQH2). This Neisseria meningitidis serogroup C (strain 053442) protein is Ubiquinone/menaquinone biosynthesis C-methyltransferase UbiE.